The primary structure comprises 122 residues: Protein NIM1-INTERACTING 2 (122 aa).

Residues 1-22 (MNNSLKKEERVEEDNGKSDGNR) are compositionally biased toward basic and acidic residues. Positions 1–28 (MNNSLKKEERVEEDNGKSDGNRGKPSTE) are disordered. Residues 39 to 45 (DEFFKIL) are involved in NPR1/NIM1 interaction. Residues 70–74 (KKRKR) carry the Nuclear localization signal motif.

As to quaternary structure, interacts with NPR1 N-terminal region.

It localises to the nucleus. The sequence is that of Protein NIM1-INTERACTING 2 from Arabidopsis thaliana (Mouse-ear cress).